Here is a 414-residue protein sequence, read N- to C-terminus: uncharacterized protein (414 aa).

Residues 1–16 (MRVILLLAFLISLTEC) form the signal peptide. Residues 20 to 59 (SEDLALYDLVEEVGVNFYEWFDIPRDASSNQVKKAYRKLT) form the Myb-like 1 domain. The J domain maps to 35–99 (NFYEWFDIPR…ELREKYDNVL (65 aa)). Residues 125-145 (ILVLLFIGTIAHYLMMWAAYF) form a helical membrane-spanning segment. A disordered region spans residues 211–234 (MTPKEVEPEEPTEEELAQQRRQQR). The span at 217–226 (EPEEPTEEEL) shows a compositional bias: acidic residues. Residues 274-320 (AQKQSGATWTPDELASLVRLSTEKYPAGTPNRWEQMGRVLNRSAEDV) form the Myb-like 2 domain. Positions 352–407 (KSEDDWSQAEQKAFETALQKYPKGTDERWERISEEIGSKTKKQVMVRFKQLAEMIR) constitute an SANT domain.

It localises to the nucleus membrane. This is an uncharacterized protein from Caenorhabditis elegans.